Here is an 85-residue protein sequence, read N- to C-terminus: Antibacterial factor-related peptide 1 (85 aa).

The signal sequence occupies residues 1–19 (MLYFCLLLVLLLPNNGVSS).

As to expression, expressed in the pharynx and body wall muscle.

Its subcellular location is the secreted. The sequence is that of Antibacterial factor-related peptide 1 from Caenorhabditis elegans.